The primary structure comprises 325 residues: MAQQIELTNTVKDSQLGQRLDQAIAELFADFSRSRLKEWLLDGKVTVDGNVVTKPRTKVMGGEVITVLAELEDEVRWEAQDIPLDIVYEDDDILVINKPRDFVVHPGAGTPDGTVLNALLFHCPEVAEVPRAGIVHRLDKDTTGLMVVAKTVPAQTRLVRALQKRNITREYEAIAIGRMTAGGKVDKPIGRHATKRTLMAVSPMGKPAVTHFRVAEHFREHTRIRLRLETGRTHQIRVHMSYLQHPLLGDAAYGGRARIPAGASEDVTAMIRNFDRQALHAVMLRFEHPITGEEMEFHAPVPDDMVELTETLRRDAQEHGLPDEY.

Residues 18–91 (QRLDQAIAEL…IPLDIVYEDD (74 aa)) enclose the S4 RNA-binding domain. The active site involves D139.

It belongs to the pseudouridine synthase RluA family.

It is found in the cytoplasm. The enzyme catalyses uridine(1911/1915/1917) in 23S rRNA = pseudouridine(1911/1915/1917) in 23S rRNA. Its function is as follows. Responsible for synthesis of pseudouridine from uracil at positions 1911, 1915 and 1917 in 23S ribosomal RNA. This chain is Ribosomal large subunit pseudouridine synthase D (rluD), found in Vibrio vulnificus (strain CMCP6).